Here is a 173-residue protein sequence, read N- to C-terminus: 3-hydroxydecanoyl-[acyl-carrier-protein] dehydratase (173 aa).

Residue His-71 is part of the active site.

This sequence belongs to the thioester dehydratase family. FabA subfamily. In terms of assembly, homodimer.

Its subcellular location is the cytoplasm. The catalysed reaction is a (3R)-hydroxyacyl-[ACP] = a (2E)-enoyl-[ACP] + H2O. It carries out the reaction (3R)-hydroxydecanoyl-[ACP] = (2E)-decenoyl-[ACP] + H2O. It catalyses the reaction (2E)-decenoyl-[ACP] = (3Z)-decenoyl-[ACP]. It participates in lipid metabolism; fatty acid biosynthesis. Necessary for the introduction of cis unsaturation into fatty acids. Catalyzes the dehydration of (3R)-3-hydroxydecanoyl-ACP to E-(2)-decenoyl-ACP and then its isomerization to Z-(3)-decenoyl-ACP. Can catalyze the dehydratase reaction for beta-hydroxyacyl-ACPs with saturated chain lengths up to 16:0, being most active on intermediate chain length. This chain is 3-hydroxydecanoyl-[acyl-carrier-protein] dehydratase, found in Baumannia cicadellinicola subsp. Homalodisca coagulata.